The following is a 1442-amino-acid chain: MTHPSAPRARSNGKEPEKEEPRCVHPDLTPLNVKDLDNKSSSAITNENVSSPTLLPFTERLSAIQPQIPNLLALKEPENGKNKHPDSEQDDGDMKEQRSKNLSPESDDPLLDHRHLQPGDTVSLLSHKATLQMYRDNAKKTNDPMLSYELAVFMLDVSRSLEFSQQMLSRGQDPAAESEQLAKEAMSILRRLADRGHVESQYLAGDCCMNGYGMSKGRPDLGLAYSYFVQAGKRGHPDAAYRAGTCYEKGWGCRRDPAKAVQFYKMAASRKHPGAQYRLGTAELNGELGLKRLAREGVKWLKRSAENATPEFPHALHELALLHEKGIYNVLFVDNEYSCELLAQAVEMGYAPSAYKLGVNYEYGRMGCPQDSGLSIHMYNIAAQQNHKEACFALTSWYLVGVPGILPQSDTEAYLWAKRAAEQGLAKAEYACGYFCENGIGTPRDLGEAKGWYQRAVEHGDNRASSRLNTLSGYTAKPVGIAADEASAKNLPQAIPVQPLSAPFPSAAPISTMRTLGVANYPTPKTMKETQAMQRDLHQQALVAAIEEREKPKTATPTSPQGPSFFGQKGSQGRPSEKPFSPSQPPKEGGKPMSLIAAGPRAGFPKPPTPPPPPPPEPEPDADAQLAANPKSFKSRLLRLGKMGKIRKGAASEGAEGEDAENVAGLEVPEGEEPLSATEKVPDGNEAPKSAPNADADKETGLNKDPAGVGEGAPSPKPETGAMVLSGPKPLGQARGQPPALTPGPSGPSSAAGADGAPRLPGEPKQHTLGDSSKPEAADKMSQEATEKSKDVNNEKSKNKKSEKSGGLSFFGLGKKIMNKGSDKPGSEDKKNQEVPKPSDEASPSIAKPTDTPAPLSPRPDEKNSSLVERSKDSESTSPSSPKPTTGSAEPSVPPMPAMPPSTVVRPSPSMALVPGRLPAIGAPDRTESNPVPASPQIGGIVPSRPPPPGVRPVMPGTMMTSRPFPPGARPGMPPNAQPGARPGMPPNAQPGARPGMPPNAQPGLRPGMPPNVQPGARPGMPPNVQPGARPGMPPNAQPGARPGMPPNAQPGLRPGMPPNAQPGLRPGMPPNVQPGARPGMPPNVQPGARPGMPPNAQPDTLSGLPLNVNAPEANNMLQLHPSAASGVRPPAALQPSLRPGPRPFSPTFPSPAGPSRPNPHLLPGVSSSSDGATPRANGHGVKPGSPPSMPEQHSFAPPAMQPGRPPSPSSPFGRPPTGPFSPSAVRMPRMPSQSSMHQSGNGPSPPKPGQMMNVSLPARTNQPHLGGASPRPPRPTSPPPFLTSQQPNRPPVPRGVMPPGSGPSMRPPQPPAIIPPPPRSPPARVNQPSLGPPGSSMPQGRMDMPSGPTAQGQSPLSKAMVSPPKMSSPDRPPFAPPTHVTPPKTPAKASGFSTPDSSSSKIMEFKDAESDNLNFGSATTTENAAAVGEDKSVRKKWLGFL.

Disordered stretches follow at residues 1-54 (MTHP…SPTL) and 72-117 (LALK…RHLQ). The segment covering 12-25 (NGKEPEKEEPRCVH) has biased composition (basic and acidic residues). Over residues 39–53 (KSSSAITNENVSSPT) the composition is skewed to polar residues. A compositionally biased stretch (basic and acidic residues) spans 75 to 99 (KEPENGKNKHPDSEQDDGDMKEQRS). Sel1-like repeat units lie at residues 198 to 236 (VESQ…KRGH), 237 to 272 (PDAA…SRKH), 273 to 309 (PGAQ…ENAT), 313 to 350 (PHAL…EMGY), 351 to 387 (APSA…QQNH), 388 to 425 (KEAC…EQGL), and 426 to 461 (AKAE…EHGD). The interval 550-1402 (EKPKTATPTS…FSTPDSSSSK (853 aa)) is disordered. Positions 605–617 (PKPPTPPPPPPPE) are enriched in pro residues. Positions 633–648 (FKSRLLRLGKMGKIRK) are enriched in basic residues. The segment covering 747–758 (GPSSAAGADGAP) has biased composition (low complexity). Composition is skewed to basic and acidic residues over residues 762–804 (GEPK…KSEK), 821–840 (GSDK…KPSD), and 859–875 (RPDE…KDSE). Positions 876-891 (STSPSSPKPTTGSAEP) are enriched in low complexity. Pro residues-rich tracts occupy residues 964 to 977 (PFPP…PPNA), 1139 to 1158 (RPGP…PSRP), and 1200 to 1220 (AMQP…PTGP). The segment covering 1232–1243 (PSQSSMHQSGNG) has biased composition (polar residues). A compositionally biased stretch (pro residues) spans 1271–1282 (PRPPRPTSPPPF). The segment covering 1295–1305 (RGVMPPGSGPS) has biased composition (low complexity). Pro residues-rich tracts occupy residues 1306–1322 (MRPP…PRSP) and 1371–1386 (DRPP…PPKT). The segment covering 1392 to 1402 (GFSTPDSSSSK) has biased composition (polar residues).

The protein belongs to the SKT5 family.

Its subcellular location is the cell membrane. Activator of the chitin synthase CHS3 which polymerizes chitin, a structural polymer of the fungal cell wall. This Malassezia restricta (strain ATCC 96810 / NBRC 103918 / CBS 7877) (Seborrheic dermatitis infection agent) protein is Chitin synthase regulator SKT5.